A 166-amino-acid chain; its full sequence is Olee1-like protein (166 aa).

The first 23 residues, methionine 1–serine 23, serve as a signal peptide directing secretion. 3 cysteine pairs are disulfide-bonded: cysteine 35–cysteine 106, cysteine 38–cysteine 150, and cysteine 59–cysteine 94.

Belongs to the Ole e I family.

It localises to the secreted. This chain is Olee1-like protein, found in Betula pendula (European white birch).